The primary structure comprises 95 residues: U8-barytoxin-Tl1a (95 aa).

Residues 1 to 21 (MKTLVLVAVLGLASLYLLSYA) form the signal peptide. The propeptide occupies 22–50 (SEVQQLSVAEEEFGALIDAFGGLLETEER). 3 disulfides stabilise this stretch: Cys57-Cys71, Cys64-Cys76, and Cys70-Cys86.

This sequence belongs to the neurotoxin 10 (Hwtx-1) family. 26 (ICK-1) subfamily. As to expression, expressed by the venom gland.

Its subcellular location is the secreted. Functionally, ion channel inhibitor. This chain is U8-barytoxin-Tl1a, found in Trittame loki (Brush-footed trapdoor spider).